The primary structure comprises 423 residues: uncharacterized protein (423 aa).

Belongs to the IIV-6 198R family.

This is an uncharacterized protein from Aedes vexans (Inland floodwater mosquito).